The chain runs to 874 residues: Alanine--tRNA ligase (874 aa).

Zn(2+) contacts are provided by His-562, His-566, Cys-665, and His-669.

This sequence belongs to the class-II aminoacyl-tRNA synthetase family. It depends on Zn(2+) as a cofactor.

The protein resides in the cytoplasm. The catalysed reaction is tRNA(Ala) + L-alanine + ATP = L-alanyl-tRNA(Ala) + AMP + diphosphate. In terms of biological role, catalyzes the attachment of alanine to tRNA(Ala) in a two-step reaction: alanine is first activated by ATP to form Ala-AMP and then transferred to the acceptor end of tRNA(Ala). Also edits incorrectly charged Ser-tRNA(Ala) and Gly-tRNA(Ala) via its editing domain. The protein is Alanine--tRNA ligase of Pseudomonas savastanoi pv. phaseolicola (strain 1448A / Race 6) (Pseudomonas syringae pv. phaseolicola (strain 1448A / Race 6)).